The following is a 577-amino-acid chain: Proline--tRNA ligase (577 aa).

It belongs to the class-II aminoacyl-tRNA synthetase family. ProS type 1 subfamily. In terms of assembly, homodimer.

It is found in the cytoplasm. The catalysed reaction is tRNA(Pro) + L-proline + ATP = L-prolyl-tRNA(Pro) + AMP + diphosphate. Functionally, catalyzes the attachment of proline to tRNA(Pro) in a two-step reaction: proline is first activated by ATP to form Pro-AMP and then transferred to the acceptor end of tRNA(Pro). As ProRS can inadvertently accommodate and process non-cognate amino acids such as alanine and cysteine, to avoid such errors it has two additional distinct editing activities against alanine. One activity is designated as 'pretransfer' editing and involves the tRNA(Pro)-independent hydrolysis of activated Ala-AMP. The other activity is designated 'posttransfer' editing and involves deacylation of mischarged Ala-tRNA(Pro). The misacylated Cys-tRNA(Pro) is not edited by ProRS. The sequence is that of Proline--tRNA ligase from Thermotoga sp. (strain RQ2).